The following is a 512-amino-acid chain: MQKNRKNVKKKLVLIIIDGLGLRFESQGNGFALAKTPVFDRLFQEYPNSLIAASGQEVGLPEGQMGNSEVGHLNIGAGFVVYTGISIINNALKTGKFFENEKFILAFRHSIKTGFPLQIMGLFSPGGVHSHQDHLFALIDFAANFGVKKLNLHLFGDGRDVGPKSIKPWIKMLNLKLKNYENYKIASISGRFYSMDRDKMFDRVELGYNALLGKAENTFTDPIDYVNFQYEKGVSDEFFEPAINLKVNKKDFLADDHPVIFFNFRPDRARQLSHLILQTDLYEQKPKNPIKTDVFVSMMKYEGINCLVAFEEMRVENPLGKLICMAGFRQLRLAETQKYAHVTFFVDGGVELELENSDRILIDSLKVQSYADFPQMSAVEITDKLLEVGQKYDFIIMNFANPDMVGHTGDLKATIKAVEILDFQIGRICKWAEEKNFDFFITADHGNAELTEDENGNPSTKHTTFPVMLISSDKTIKLKSGKLANIAPTILDYLGLDKHPDMDHDSLIIKDK.

Mn(2+)-binding residues include D18 and S68. The active-site Phosphoserine intermediate is S68. Residues H129, 159–160 (RD), R191, R197, 265–268 (RPDR), and K338 contribute to the substrate site. 5 residues coordinate Mn(2+): D403, H407, D444, H445, and H462.

This sequence belongs to the BPG-independent phosphoglycerate mutase family. In terms of assembly, monomer. The cofactor is Mn(2+).

The catalysed reaction is (2R)-2-phosphoglycerate = (2R)-3-phosphoglycerate. The protein operates within carbohydrate degradation; glycolysis; pyruvate from D-glyceraldehyde 3-phosphate: step 3/5. Functionally, catalyzes the interconversion of 2-phosphoglycerate and 3-phosphoglycerate. This Mesomycoplasma hyopneumoniae (strain 232) (Mycoplasma hyopneumoniae) protein is 2,3-bisphosphoglycerate-independent phosphoglycerate mutase.